Consider the following 166-residue polypeptide: Bacterial non-heme ferritin (166 aa).

Residues 2 to 145 (LSKELLAALN…THIDYLTRIG (144 aa)) form the Ferritin-like diiron domain. Residues glutamate 17, glutamate 50, histidine 53, glutamate 94, and glutamine 127 each coordinate Fe cation.

The protein belongs to the ferritin family. Prokaryotic subfamily.

It localises to the cytoplasm. The enzyme catalyses 4 Fe(2+) + O2 + 6 H2O = 4 iron(III) oxide-hydroxide + 12 H(+). In terms of biological role, iron-storage protein. This is Bacterial non-heme ferritin (ftnA) from Staphylococcus epidermidis (strain ATCC 35984 / DSM 28319 / BCRC 17069 / CCUG 31568 / BM 3577 / RP62A).